Consider the following 540-residue polypeptide: MVVQNNFLFIAFIFVTFMMLDAWQSESYDYKSLDKNHIIEKKNIENKNINKEVFSRENYITVITDLFILKINTYGGDIEEASLRTYLSNTKNNLPLKILDRSKNFIYKLKSGFITKNDHDINNLIHIPNFISDKKLYILEDNSDYLQVPLFYNGENGLKYVKNFIFKKNSFSLKINYSIKNTNKDKMEMMFFGQLEQSIKDQEINNGYNFNFHTYRGAAYSSDNNKYKKYDFSEISNDKNLNVITSNGWIAMLQQYFIVAWIPKIENKYKFYTKNIPKDEKVSIGFQSELFSIDQEEEKNIESTLWIGPKLQDKMYEVDANLGLTVDYGWLWFIAQPLLQLLKFIYKYINNWGISIIIITFMVRGIMFPLTKAQYTSMAKMRILQPKIIEIKNKFSNDKKRQSKEMMSLYKKQKVNPLGGCMPLIIQMPIFLALYYMLSGSVELRHAHFVLWINDLSSKDPYYILPIIMGITMFLIQKISPSSISDPVQKKIVSFMPLIFTIFFLWFPSGLVLYYIISNLVTIIQQYIIYKDLKKVGILI.

Helical transmembrane passes span 1-21 (MVVQNNFLFIAFIFVTFMMLD), 351-371 (NWGISIIIITFMVRGIMFPLT), 418-438 (LGGCMPLIIQMPIFLALYYML), 464-484 (ILPIIMGITMFLIQKISPSSI), and 497-517 (PLIFTIFFLWFPSGLVLYYII).

Belongs to the OXA1/ALB3/YidC family. Type 1 subfamily. Interacts with the Sec translocase complex via SecD. Specifically interacts with transmembrane segments of nascent integral membrane proteins during membrane integration.

The protein localises to the cell membrane. Its function is as follows. Required for the insertion and/or proper folding and/or complex formation of integral membrane proteins into the membrane. Involved in integration of membrane proteins that insert both dependently and independently of the Sec translocase complex, as well as at least some lipoproteins. Aids folding of multispanning membrane proteins. The polypeptide is Membrane protein insertase YidC (Wigglesworthia glossinidia brevipalpis).